The following is a 285-amino-acid chain: Putative phosphatase MG125 (285 aa).

D8 (nucleophile) is an active-site residue. D8 provides a ligand contact to Mg(2+). L9 contacts phosphate. D10 lines the Mg(2+) pocket. Residues 44 to 45 and K205 contribute to the phosphate site; that span reads TG. Mg(2+) contacts are provided by D228 and S229. Position 231 (N231) interacts with phosphate.

It belongs to the HAD-like hydrolase superfamily. Cof family. Requires Mg(2+) as cofactor.

The chain is Putative phosphatase MG125 from Mycoplasma genitalium (strain ATCC 33530 / DSM 19775 / NCTC 10195 / G37) (Mycoplasmoides genitalium).